The primary structure comprises 244 residues: Glucosamine-6-phosphate deaminase (244 aa).

The Proton acceptor; for enolization step role is filled by Asp-67. Asn-136 functions as the For ring-opening step in the catalytic mechanism. His-138 serves as the catalytic Proton acceptor; for ring-opening step. Glu-143 (for ring-opening step) is an active-site residue.

It belongs to the glucosamine/galactosamine-6-phosphate isomerase family. NagB subfamily.

It carries out the reaction alpha-D-glucosamine 6-phosphate + H2O = beta-D-fructose 6-phosphate + NH4(+). The protein operates within amino-sugar metabolism; N-acetylneuraminate degradation; D-fructose 6-phosphate from N-acetylneuraminate: step 5/5. In terms of biological role, catalyzes the reversible isomerization-deamination of glucosamine 6-phosphate (GlcN6P) to form fructose 6-phosphate (Fru6P) and ammonium ion. The polypeptide is Glucosamine-6-phosphate deaminase (Clostridium botulinum (strain Loch Maree / Type A3)).